A 183-amino-acid polypeptide reads, in one-letter code: dCTP deaminase (183 aa).

Residues 106–111 (KSTYAR), 130–132 (TLE), glutamine 151, tyrosine 165, and glutamine 175 each bind dCTP. Glutamate 132 acts as the Proton donor/acceptor in catalysis.

This sequence belongs to the dCTP deaminase family. Homotrimer.

It catalyses the reaction dCTP + H2O + H(+) = dUTP + NH4(+). It participates in pyrimidine metabolism; dUMP biosynthesis; dUMP from dCTP (dUTP route): step 1/2. Functionally, catalyzes the deamination of dCTP to dUTP. This Acidobacterium capsulatum (strain ATCC 51196 / DSM 11244 / BCRC 80197 / JCM 7670 / NBRC 15755 / NCIMB 13165 / 161) protein is dCTP deaminase.